The sequence spans 510 residues: Cytochrome P450 52C2 (510 aa).

A heme-binding site is contributed by Cys-458.

Belongs to the cytochrome P450 family. Heme is required as a cofactor.

The protein localises to the membrane. Functionally, together with an NADPH cytochrome P450 the enzyme system catalyzes the terminal hydroxylation as the first step in the assimilation of alkanes and fatty acids. The protein is Cytochrome P450 52C2 (CYP52C2) of Candida maltosa (Yeast).